We begin with the raw amino-acid sequence, 853 residues long: EF-hand domain-containing family member B (853 aa).

Disordered regions lie at residues 1–31 (MCSFVRVGSPKPLQTSASPLEMSSLRRTRAP) and 244–266 (AQQPEEKKEPGSTEPGVEPPGNI). EF-hand domains lie at 581–616 (QNFDTLQVAFRHYDKKGDGVIDRAELHEACVQANLH) and 617–652 (LDKMLLDHLFDYCDVDQDGLINYLEFANFLNWKDRI). Ca(2+) contacts are provided by D594, D598, E605, D630, D632, D634, and E641.

As to quaternary structure, microtubule inner protein component of sperm flagellar doublet microtubules. Interacts with STIM1 and ORAI1; the interactions take place upon Ca(2+)-store depletion and dissociate through a Ca(2+)-dependent mechanism. Interaction with STIM1 inhibits STIM1 interaction with SARAF.

Its subcellular location is the cytoplasm. It is found in the cytoskeleton. It localises to the cilium axoneme. The protein localises to the flagellum axoneme. Functionally, microtubule inner protein (MIP) part of the dynein-decorated doublet microtubules (DMTs) in cilia axoneme, which is required for motile cilia beating. Cytosolic sensor for calcium, modulates the interaction of STIM1 and ORAI1 upon store depletion and the activation of store-operated Ca(2+) entry (SOCE) and NFAT translocation from cytosol to nucleus. The chain is EF-hand domain-containing family member B from Mus musculus (Mouse).